We begin with the raw amino-acid sequence, 385 residues long: 3-dehydroquinate synthase (385 aa).

NAD(+) contacts are provided by residues 122–126 (GVIGD), 146–147 (TT), K159, and K168. Residues E201, H264, and H282 each contribute to the Zn(2+) site.

The protein belongs to the sugar phosphate cyclases superfamily. Dehydroquinate synthase family. Co(2+) serves as cofactor. Requires Zn(2+) as cofactor. NAD(+) is required as a cofactor.

It is found in the cytoplasm. The catalysed reaction is 7-phospho-2-dehydro-3-deoxy-D-arabino-heptonate = 3-dehydroquinate + phosphate. It functions in the pathway metabolic intermediate biosynthesis; chorismate biosynthesis; chorismate from D-erythrose 4-phosphate and phosphoenolpyruvate: step 2/7. Its function is as follows. Catalyzes the conversion of 3-deoxy-D-arabino-heptulosonate 7-phosphate (DAHP) to dehydroquinate (DHQ). In Rhodospirillum rubrum (strain ATCC 11170 / ATH 1.1.1 / DSM 467 / LMG 4362 / NCIMB 8255 / S1), this protein is 3-dehydroquinate synthase.